The chain runs to 387 residues: Putative actin-29 (387 aa).

Belongs to the actin family.

The protein resides in the cytoplasm. It is found in the cytoskeleton. It carries out the reaction ATP + H2O = ADP + phosphate + H(+). Actins are highly conserved proteins that are involved in various types of cell motility and are ubiquitously expressed in all eukaryotic cells. Multiple isoforms are involved in various cellular functions such as cytoskeleton structure, cell mobility, chromosome movement and muscle contraction. This Dictyostelium discoideum (Social amoeba) protein is Putative actin-29 (act29).